The following is a 419-amino-acid chain: Acyl-coenzyme A thioesterase 6 (419 aa).

Residues serine 232, aspartate 324, and histidine 358 each act as charge relay system in the active site. A Peroxisome targeting signal motif is present at residues 417–419 (SKL).

The protein belongs to the C/M/P thioester hydrolase family. As to expression, highly expressed in white adipose tissue. Detected at lower levels in kidney, liver, brown adipose tissue and brain.

Its subcellular location is the peroxisome. The catalysed reaction is pristanoyl-CoA + H2O = 2,6,10,14-tetramethylpentadecanoate + CoA + H(+). The enzyme catalyses phytanoyl-CoA + H2O = 3,7,11,15-tetramethylhexadecanoate + CoA + H(+). The protein operates within lipid metabolism; fatty acid metabolism. Its function is as follows. Catalyzes the hydrolysis of acyl-CoAs into free fatty acids and coenzyme A (CoASH), regulating their respective intracellular levels. Catalyzes the hydrolysis of phytanoyl-CoA and pristanoyl-CoA, two methyl-branched fatty acids derived from phytol, that enter the body via the diet. The polypeptide is Acyl-coenzyme A thioesterase 6 (Mus musculus (Mouse)).